Reading from the N-terminus, the 184-residue chain is Photosystem I assembly protein Ycf4 (184 aa).

2 consecutive transmembrane segments (helical) span residues 22–42 (FCWAIILFLGSLGFLLVGTSS) and 57–77 (IVFFPQGIVMSFYGIAGLFIS).

It belongs to the Ycf4 family.

It localises to the plastid. Its subcellular location is the chloroplast thylakoid membrane. In terms of biological role, seems to be required for the assembly of the photosystem I complex. This chain is Photosystem I assembly protein Ycf4, found in Helianthus annuus (Common sunflower).